A 555-amino-acid polypeptide reads, in one-letter code: O-fucosyltransferase 20 (555 aa).

Topologically, residues 1–58 (MALPKNGGNSSSTKKKVSYISVPSQIINSLSSSSLQSLLVSPKKSSRCTNRFSYRNPR) are cytoplasmic. The helical; Signal-anchor for type II membrane protein transmembrane segment at 59 to 79 (IWFLTLFLVSLFGMLKLGLNV) threads the bilayer. The Lumenal segment spans residues 80-555 (DPISLPFSRY…MCSDRRQQQQ (476 aa)). The interval 110–130 (KNDTQSSSSSEHRKNETLPTE) is disordered. Asparagine 111 and asparagine 124 each carry an N-linked (GlcNAc...) asparagine glycan. 330–332 (HLR) is a substrate binding site. 2 N-linked (GlcNAc...) asparagine glycosylation sites follow: asparagine 371 and asparagine 503. Positions 525 to 555 (QPELRTGRGGKDVTKHPVSECMCSDRRQQQQ) are disordered. Residues 529–555 (RTGRGGKDVTKHPVSECMCSDRRQQQQ) show a composition bias toward basic and acidic residues.

It belongs to the glycosyltransferase GT106 family. Highly expressed in embryogenic microspore and in vegetative tissues.

It localises to the golgi apparatus membrane. It participates in glycan metabolism. May play a role in the biosynthesis of matrix polysaccharides and contribute to the biomechanics and development of the plant cell wall. This chain is O-fucosyltransferase 20, found in Brassica napus (Rape).